A 213-amino-acid polypeptide reads, in one-letter code: Small ribosomal subunit protein uS5 (213 aa).

The interval Met-1–Arg-42 is disordered. Residues Tyr-45–Val-108 form the S5 DRBM domain.

The protein belongs to the universal ribosomal protein uS5 family. Part of the 30S ribosomal subunit. Contacts proteins S4 and S8.

Functionally, with S4 and S12 plays an important role in translational accuracy. Located at the back of the 30S subunit body where it stabilizes the conformation of the head with respect to the body. The chain is Small ribosomal subunit protein uS5 from Corynebacterium urealyticum (strain ATCC 43042 / DSM 7109).